Here is a 558-residue protein sequence, read N- to C-terminus: FRIGIDA-like protein 3 (558 aa).

Residues 9–102 (SLMDSTSSKI…ALERLQKKRD (94 aa)) are a coiled coil. Residues 454 to 463 (AKADKKRATE) show a composition bias toward basic and acidic residues. The interval 454-494 (AKADKKRATEPMKPQPKRPRGAQPRVTDNNNNINNNKTGYG) is disordered.

The protein belongs to the Frigida family.

This chain is FRIGIDA-like protein 3 (FRL3), found in Arabidopsis thaliana (Mouse-ear cress).